The primary structure comprises 271 residues: Ribosomal RNA small subunit methyltransferase A (271 aa).

The S-adenosyl-L-methionine site is built by Asn19, Leu21, Gly46, Glu67, Asp92, and Asn114.

This sequence belongs to the class I-like SAM-binding methyltransferase superfamily. rRNA adenine N(6)-methyltransferase family. RsmA subfamily.

It is found in the cytoplasm. The enzyme catalyses adenosine(1518)/adenosine(1519) in 16S rRNA + 4 S-adenosyl-L-methionine = N(6)-dimethyladenosine(1518)/N(6)-dimethyladenosine(1519) in 16S rRNA + 4 S-adenosyl-L-homocysteine + 4 H(+). Specifically dimethylates two adjacent adenosines (A1518 and A1519) in the loop of a conserved hairpin near the 3'-end of 16S rRNA in the 30S particle. May play a critical role in biogenesis of 30S subunits. This is Ribosomal RNA small subunit methyltransferase A from Aeromonas hydrophila subsp. hydrophila (strain ATCC 7966 / DSM 30187 / BCRC 13018 / CCUG 14551 / JCM 1027 / KCTC 2358 / NCIMB 9240 / NCTC 8049).